We begin with the raw amino-acid sequence, 482 residues long: GTPase Der (482 aa).

2 EngA-type G domains span residues 3 to 166 and 195 to 368; these read PVVA…SEQF and IKLA…NSAT. Residues 9–16, 56–60, 118–121, 201–208, 248–252, and 313–316 each bind GTP; these read GRPNVGKS, DTGGI, NKVD, GKPNVGKS, DTAGV, and NKWD. The KH-like domain maps to 369 to 453; the sequence is KRINTSMLTR…PIKVEFREGA (85 aa).

It belongs to the TRAFAC class TrmE-Era-EngA-EngB-Septin-like GTPase superfamily. EngA (Der) GTPase family. In terms of assembly, associates with the 50S ribosomal subunit.

In terms of biological role, GTPase that plays an essential role in the late steps of ribosome biogenesis. The polypeptide is GTPase Der (Pseudoalteromonas atlantica (strain T6c / ATCC BAA-1087)).